Reading from the N-terminus, the 1108-residue chain is Ubiquitin carboxyl-terminal hydrolase 5 (1108 aa).

The region spanning 55-187 (FQRFTWHIKS…DGALLLTAYV (133 aa)) is the MATH domain. Residues cysteine 120 and cysteine 222 each act as nucleophile in the active site. The USP domain occupies 213–528 (VGLKNQGATC…SAYMLLYLRK (316 aa)). Catalysis depends on histidine 464, which acts as the Proton acceptor.

This sequence belongs to the peptidase C19 family.

The protein localises to the nucleus. It catalyses the reaction Thiol-dependent hydrolysis of ester, thioester, amide, peptide and isopeptide bonds formed by the C-terminal Gly of ubiquitin (a 76-residue protein attached to proteins as an intracellular targeting signal).. In terms of biological role, hydrolase that deubiquitinates target proteins. Cleaves the UBL propeptide in sde2. This is Ubiquitin carboxyl-terminal hydrolase 5 (ubp5) from Schizosaccharomyces pombe (strain 972 / ATCC 24843) (Fission yeast).